The primary structure comprises 165 residues: Transcription elongation factor A protein-like 1 (165 aa).

Positions 1 to 101 (MENTRSENEE…EQPPCGVGKH (101 aa)) are disordered. Positions 33 to 60 (CSEEDQSSEDLSSEEQSSEEEFFPEELL) are enriched in acidic residues.

Belongs to the TFS-II family. TFA subfamily.

Its subcellular location is the nucleus. Functionally, may be involved in transcriptional regulation. Modulates various viral and cellular promoters in a promoter context-dependent manner. Does not bind DNA directly. The protein is Transcription elongation factor A protein-like 1 of Mus musculus (Mouse).